A 354-amino-acid polypeptide reads, in one-letter code: UDP-N-acetylglucosamine--N-acetylmuramyl-(pentapeptide) pyrophosphoryl-undecaprenol N-acetylglucosamine transferase 1 (354 aa).

UDP-N-acetyl-alpha-D-glucosamine-binding positions include 12–14 (TAG), Arg163, Ser193, and Gln287.

This sequence belongs to the glycosyltransferase 28 family. MurG subfamily.

It localises to the cell membrane. It carries out the reaction di-trans,octa-cis-undecaprenyl diphospho-N-acetyl-alpha-D-muramoyl-L-alanyl-D-glutamyl-meso-2,6-diaminopimeloyl-D-alanyl-D-alanine + UDP-N-acetyl-alpha-D-glucosamine = di-trans,octa-cis-undecaprenyl diphospho-[N-acetyl-alpha-D-glucosaminyl-(1-&gt;4)]-N-acetyl-alpha-D-muramoyl-L-alanyl-D-glutamyl-meso-2,6-diaminopimeloyl-D-alanyl-D-alanine + UDP + H(+). It participates in cell wall biogenesis; peptidoglycan biosynthesis. Cell wall formation. Catalyzes the transfer of a GlcNAc subunit on undecaprenyl-pyrophosphoryl-MurNAc-pentapeptide (lipid intermediate I) to form undecaprenyl-pyrophosphoryl-MurNAc-(pentapeptide)GlcNAc (lipid intermediate II). The chain is UDP-N-acetylglucosamine--N-acetylmuramyl-(pentapeptide) pyrophosphoryl-undecaprenol N-acetylglucosamine transferase 1 from Bacillus thuringiensis (strain Al Hakam).